Consider the following 125-residue polypeptide: Gene 61 protein (125 aa).

The chain is Gene 61 protein (61) from Mycobacterium phage D29 (Mycobacteriophage D29).